A 105-amino-acid chain; its full sequence is Met repressor (105 aa).

Belongs to the MetJ family. As to quaternary structure, homodimer.

The protein resides in the cytoplasm. This regulatory protein, when combined with SAM (S-adenosylmethionine) represses the expression of the methionine regulon and of enzymes involved in SAM synthesis. The polypeptide is Met repressor (Erwinia tasmaniensis (strain DSM 17950 / CFBP 7177 / CIP 109463 / NCPPB 4357 / Et1/99)).